The sequence spans 98 residues: NADH-ubiquinone oxidoreductase chain 4L (98 aa).

Helical transmembrane passes span 1-21 (MTHI…GLTF), 26-46 (LLSA…ALAM), and 59-79 (APLL…SLLV).

The protein belongs to the complex I subunit 4L family.

It localises to the mitochondrion membrane. The catalysed reaction is a ubiquinone + NADH + 5 H(+)(in) = a ubiquinol + NAD(+) + 4 H(+)(out). Its function is as follows. Core subunit of the mitochondrial membrane respiratory chain NADH dehydrogenase (Complex I) which catalyzes electron transfer from NADH through the respiratory chain, using ubiquinone as an electron acceptor. Part of the enzyme membrane arm which is embedded in the lipid bilayer and involved in proton translocation. This Polypterus ornatipinnis (Ornate bichir) protein is NADH-ubiquinone oxidoreductase chain 4L (MT-ND4L).